The chain runs to 506 residues: Galactose/methyl galactoside import ATP-binding protein MglA (506 aa).

2 consecutive ABC transporter domains span residues L14–E249 and V264–L506. Residue G46–S53 participates in ATP binding.

It belongs to the ABC transporter superfamily. Galactose/methyl galactoside importer (TC 3.A.1.2.3) family. As to quaternary structure, the complex is composed of one ATP-binding protein (MglA), two transmembrane proteins (MglC) and a solute-binding protein (MglB).

The protein resides in the cell inner membrane. It carries out the reaction D-galactose(out) + ATP + H2O = D-galactose(in) + ADP + phosphate + H(+). The enzyme catalyses methyl beta-D-galactoside(out) + ATP + H2O = methyl beta-D-galactoside(in) + ADP + phosphate + H(+). Part of the ABC transporter complex MglABC involved in galactose/methyl galactoside import. Responsible for energy coupling to the transport system. This Mannheimia succiniciproducens (strain KCTC 0769BP / MBEL55E) protein is Galactose/methyl galactoside import ATP-binding protein MglA.